We begin with the raw amino-acid sequence, 532 residues long: Cytochrome P450 99A2 (532 aa).

A helical membrane pass occupies residues 30 to 50 (SAATLTLVSLLTLPILLALLT). Heme is bound at residue C468. Residues 473–493 (FGMVLLELIVARLLYYFDWSL) form a helical membrane-spanning segment.

It belongs to the cytochrome P450 family. It depends on heme as a cofactor.

The protein localises to the membrane. Its function is as follows. Involved in momilactone phytoalexins biosynthesis. Participates in the biosynthetic steps between 9-beta-pimara-7,15-diene and 3-beta-hydroxy-9-beta-pimara-7,15-dien-19,6-beta-olide. This Oryza sativa subsp. japonica (Rice) protein is Cytochrome P450 99A2 (CYP99A2).